The primary structure comprises 637 residues: Chaperone protein HtpG (637 aa).

Positions 1–348 (MAEAGQMEKH…SNDLPLNVSR (348 aa)) are a; substrate-binding. Positions 349–565 (EILQDNKITR…DNDMSTQMAK (217 aa)) are b. The segment at 566 to 637 (LMEAAGQAVP…TRLNKLMLNA (72 aa)) is c.

It belongs to the heat shock protein 90 family. Homodimer.

The protein resides in the cytoplasm. Its function is as follows. Molecular chaperone. Has ATPase activity. This chain is Chaperone protein HtpG, found in Idiomarina loihiensis (strain ATCC BAA-735 / DSM 15497 / L2-TR).